A 674-amino-acid polypeptide reads, in one-letter code: DNA ligase (674 aa).

NAD(+) is bound by residues 34–38 (DFEFD), 83–84 (SL), and Glu117. The active-site N6-AMP-lysine intermediate is Lys119. Residues Arg140, Glu184, Lys297, and Lys321 each coordinate NAD(+). Positions 415, 418, 433, and 439 each coordinate Zn(2+). Residues 598 to 674 (LVNNNFEGQS…IDEDEFERML (77 aa)) enclose the BRCT domain.

It belongs to the NAD-dependent DNA ligase family. LigA subfamily. Requires Mg(2+) as cofactor. Mn(2+) is required as a cofactor.

The enzyme catalyses NAD(+) + (deoxyribonucleotide)n-3'-hydroxyl + 5'-phospho-(deoxyribonucleotide)m = (deoxyribonucleotide)n+m + AMP + beta-nicotinamide D-nucleotide.. Functionally, DNA ligase that catalyzes the formation of phosphodiester linkages between 5'-phosphoryl and 3'-hydroxyl groups in double-stranded DNA using NAD as a coenzyme and as the energy source for the reaction. It is essential for DNA replication and repair of damaged DNA. The protein is DNA ligase of Chlorobaculum tepidum (strain ATCC 49652 / DSM 12025 / NBRC 103806 / TLS) (Chlorobium tepidum).